Reading from the N-terminus, the 176-residue chain is Isopentenyl-diphosphate Delta-isomerase (176 aa).

The Mn(2+) site is built by histidine 22 and histidine 28. The region spanning 26–160 is the Nudix hydrolase domain; sequence LRHKAVSVFV…PERYTPWLRI (135 aa). Cysteine 62 is a catalytic residue. Histidine 64 is a Mn(2+) binding site. Glutamate 82 contributes to the Mg(2+) binding site. Residues glutamate 108 and glutamate 110 each contribute to the Mn(2+) site. Glutamate 110 is a catalytic residue.

It belongs to the IPP isomerase type 1 family. It depends on Mg(2+) as a cofactor. Requires Mn(2+) as cofactor.

The protein localises to the cytoplasm. The enzyme catalyses isopentenyl diphosphate = dimethylallyl diphosphate. The protein operates within isoprenoid biosynthesis; dimethylallyl diphosphate biosynthesis; dimethylallyl diphosphate from isopentenyl diphosphate: step 1/1. It functions in the pathway porphyrin-containing compound metabolism; chlorophyll biosynthesis. Catalyzes the 1,3-allylic rearrangement of the homoallylic substrate isopentenyl (IPP) to its highly electrophilic allylic isomer, dimethylallyl diphosphate (DMAPP). This chain is Isopentenyl-diphosphate Delta-isomerase, found in Dinoroseobacter shibae (strain DSM 16493 / NCIMB 14021 / DFL 12).